Reading from the N-terminus, the 600-residue chain is Aspartate--tRNA(Asp/Asn) ligase (600 aa).

E187 is a binding site for L-aspartate. Positions 211 to 214 (QIFK) are aspartate. R233 and H463 together coordinate L-aspartate. An ATP-binding site is contributed by 233-235 (RDE). E497 serves as a coordination point for ATP. Position 504 (R504) interacts with L-aspartate. ATP is bound at residue 549–552 (GVDR).

Belongs to the class-II aminoacyl-tRNA synthetase family. Type 1 subfamily. Homodimer.

It is found in the cytoplasm. The catalysed reaction is tRNA(Asx) + L-aspartate + ATP = L-aspartyl-tRNA(Asx) + AMP + diphosphate. Functionally, aspartyl-tRNA synthetase with relaxed tRNA specificity since it is able to aspartylate not only its cognate tRNA(Asp) but also tRNA(Asn). Reaction proceeds in two steps: L-aspartate is first activated by ATP to form Asp-AMP and then transferred to the acceptor end of tRNA(Asp/Asn). The polypeptide is Aspartate--tRNA(Asp/Asn) ligase (Wolbachia pipientis wMel).